Consider the following 96-residue polypeptide: Small ribosomal subunit protein bS6 (96 aa).

This sequence belongs to the bacterial ribosomal protein bS6 family.

Functionally, binds together with bS18 to 16S ribosomal RNA. The protein is Small ribosomal subunit protein bS6 of Streptomyces griseus subsp. griseus (strain JCM 4626 / CBS 651.72 / NBRC 13350 / KCC S-0626 / ISP 5235).